The following is a 915-amino-acid chain: Protein O-mannosyl-transferase TMTC3 (915 aa).

At 1–8 the chain is on the cytoplasmic side; sequence MANINLKE. A helical transmembrane segment spans residues 9–29; sequence ITLIVGVVTACYWNSLFCGFV. Topologically, residues 30–93 are extracellular; the sequence is FDDVSAILDN…LSELKPMSYH (64 aa). The helical transmembrane segment at 94–114 threads the bilayer; it reads LLNMIFHAVVSVIFLKVCKLF. The Cytoplasmic segment spans residues 115-120; it reads LDNKSS. The next 2 helical transmembrane spans lie at 121–139 and 140–158; these read VIAS…AVTG and VVGR…AFLS. Over 159–166 the chain is Cytoplasmic; it reads YTRSKGPD. A helical membrane pass occupies residues 167–187; the sequence is NSIIWTPIALTVFLVAVATLC. At 188-193 the chain is on the extracellular side; sequence KEQGIT. A helical membrane pass occupies residues 194–214; sequence VVGICCVYEVFIAQGYTLPLL. Topologically, residues 215-231 are cytoplasmic; that stretch reads CTTAGQFLRGKGSIPFS. The helical transmembrane segment at 232 to 252 threads the bilayer; the sequence is MLQTLVKLIVLMFSTLLLVVI. Residues 253-317 are Extracellular-facing; the sequence is RVQVIQSQLP…TIPLIESLLD (65 aa). The chain crosses the membrane as a helical span at residues 318 to 338; the sequence is IRNLATFTFFCFLGMLGVFSI. Residues 339 to 353 lie on the Cytoplasmic side of the membrane; sequence RYSGDSSKTVLMALC. Residues 354–374 form a helical membrane-spanning segment; it reads LMALPFIPASNLFFPVGFVVA. At 375–376 the chain is on the extracellular side; sequence ER. A helical membrane pass occupies residues 377 to 397; that stretch reads VLYVPSMGFCILVAHGWQKIS. At 398-404 the chain is on the cytoplasmic side; that stretch reads TKSVFKK. A helical membrane pass occupies residues 405–423; that stretch reads LSWICLSMVILTHSLKTFH. At 424–915 the chain is on the extracellular side; sequence RNWDWESEYT…EEIERILNGE (492 aa). 9 TPR repeats span residues 446-479, 480-513, 529-562, 563-596, 597-631, 669-702, 703-736, 738-771, and 772-805; these read AKLW…QPDD, IGAH…MPQI, NVYI…RPDF, KQAY…DRNN, ADLW…NPKH, ANGY…QADF, RSAL…YPDH, KGLI…DPSN, and VQGK…APHE. The N-linked (GlcNAc...) asparagine glycan is linked to Asn-494. The residue at position 503 (Tyr-503) is a Phosphotyrosine. N-linked (GlcNAc...) asparagine glycosylation is present at Asn-541. The disordered stretch occupies residues 848–892; sequence KEIRGESRQTQIVKTSDNKSQSKSNKQLGKNGDEETPHKTTKDIK. Asn-865 is a glycosylation site (N-linked (GlcNAc...) asparagine). Positions 865–874 are enriched in low complexity; that stretch reads NKSQSKSNKQ. Residues 878 to 892 are compositionally biased toward basic and acidic residues; sequence NGDEETPHKTTKDIK.

Belongs to the TMTC family.

The protein resides in the membrane. It is found in the endoplasmic reticulum. It catalyses the reaction a di-trans,poly-cis-dolichyl beta-D-mannosyl phosphate + L-seryl-[protein] = 3-O-(alpha-D-mannosyl)-L-seryl-[protein] + a di-trans,poly-cis-dolichyl phosphate + H(+). The enzyme catalyses a di-trans,poly-cis-dolichyl beta-D-mannosyl phosphate + L-threonyl-[protein] = 3-O-(alpha-D-mannosyl)-L-threonyl-[protein] + a di-trans,poly-cis-dolichyl phosphate + H(+). The protein operates within protein modification; protein glycosylation. Its function is as follows. Transfers mannosyl residues to the hydroxyl group of serine or threonine residues. The 4 members of the TMTC family are O-mannosyl-transferases dedicated primarily to the cadherin superfamily, each member seems to have a distinct role in decorating the cadherin domains with O-linked mannose glycans at specific regions. Also acts as O-mannosyl-transferase on other proteins such as PDIA3. Involved in the positive regulation of proteasomal protein degradation in the endoplasmic reticulum (ER), and the control of ER stress response. The chain is Protein O-mannosyl-transferase TMTC3 from Homo sapiens (Human).